The following is a 485-amino-acid chain: Glycogen synthase (485 aa).

Lysine 15 provides a ligand contact to ADP-alpha-D-glucose.

Belongs to the glycosyltransferase 1 family. Bacterial/plant glycogen synthase subfamily.

The enzyme catalyses [(1-&gt;4)-alpha-D-glucosyl](n) + ADP-alpha-D-glucose = [(1-&gt;4)-alpha-D-glucosyl](n+1) + ADP + H(+). It functions in the pathway glycan biosynthesis; glycogen biosynthesis. In terms of biological role, synthesizes alpha-1,4-glucan chains using ADP-glucose. This chain is Glycogen synthase, found in Francisella philomiragia subsp. philomiragia (strain ATCC 25017 / CCUG 19701 / FSC 153 / O#319-036).